We begin with the raw amino-acid sequence, 297 residues long: 4-diphosphocytidyl-2-C-methyl-D-erythritol kinase (297 aa).

Active-site residues include Lys6 and Asp144.

The protein belongs to the GHMP kinase family. IspE subfamily.

It catalyses the reaction 4-CDP-2-C-methyl-D-erythritol + ATP = 4-CDP-2-C-methyl-D-erythritol 2-phosphate + ADP + H(+). Its pathway is isoprenoid biosynthesis; isopentenyl diphosphate biosynthesis via DXP pathway; isopentenyl diphosphate from 1-deoxy-D-xylulose 5-phosphate: step 3/6. In terms of biological role, catalyzes the phosphorylation of the position 2 hydroxy group of 4-diphosphocytidyl-2C-methyl-D-erythritol. The polypeptide is 4-diphosphocytidyl-2-C-methyl-D-erythritol kinase (Leptospira interrogans serogroup Icterohaemorrhagiae serovar copenhageni (strain Fiocruz L1-130)).